The following is a 519-amino-acid chain: Pleckstrin homology domain-containing family A member 8 (519 aa).

Positions 1 to 93 constitute a PH domain; it reads MEGVLYKWTN…WLVALGSAKA (93 aa). Residue Thr139 is modified to Phosphothreonine. Residue Ser145 is modified to Phosphoserine. Phosphothreonine is present on Thr153. Residues 274-302 are disordered; sequence GEDNLGNHDSSLAQPASDSSSSPPESHWE. The span at 282–298 shows a compositional bias: low complexity; sequence DSSLAQPASDSSSSPPE. Positions 310-519 are glycolipid transfer protein homology domain; the sequence is TFFSTMNTSF…VHGLESDEVV (210 aa).

Homodimer. Interacts with ARF1; the interaction together with phosphatidylinositol 4-phosphate binding is required for FAPP2 GlcCer transfer ability.

The protein localises to the golgi apparatus. The protein resides in the trans-Golgi network membrane. Its subcellular location is the membrane. Cargo transport protein that is required for apical transport from the trans-Golgi network (TGN). Transports AQP2 from the trans-Golgi network (TGN) to sites of AQP2 phosphorylation. Mediates the non-vesicular transport of glucosylceramide (GlcCer) from the trans-Golgi network (TGN) to the plasma membrane and plays a pivotal role in the synthesis of complex glycosphingolipids. Binding of both phosphatidylinositol 4-phosphate (PIP) and ARF1 are essential for the GlcCer transfer ability. Also required for primary cilium formation, possibly by being involved in the transport of raft lipids to the apical membrane, and for membrane tubulation. The chain is Pleckstrin homology domain-containing family A member 8 (PLEKHA8) from Canis lupus familiaris (Dog).